Consider the following 154-residue polypeptide: MVNLSDNPQALDINQIINILPHRYPFLLVDRVLEIDVEKGYILAQKNVTINESFFQGHFPNAPIMPGVLILEALAQAGGILVHLRGPGDKIAILLNVNHAKFRQPVKPGDVLHLKGEGLHFSSKGGRIKAEALVNQKIAAEAEIGFVFVDKSQI.

The active site involves His58.

This sequence belongs to the thioester dehydratase family. FabZ subfamily.

It localises to the cytoplasm. It catalyses the reaction a (3R)-hydroxyacyl-[ACP] = a (2E)-enoyl-[ACP] + H2O. Its function is as follows. Involved in unsaturated fatty acids biosynthesis. Catalyzes the dehydration of short chain beta-hydroxyacyl-ACPs and long chain saturated and unsaturated beta-hydroxyacyl-ACPs. The polypeptide is 3-hydroxyacyl-[acyl-carrier-protein] dehydratase FabZ (Protochlamydia amoebophila (strain UWE25)).